The sequence spans 408 residues: UDP-glucose 4-epimerase 2 (408 aa).

13-44 (TVLVTGGAGYIGSHAVLQLLLAGFRAVVVDNL) is an NAD(+) binding site. Ser-138 contributes to the substrate binding site. The active-site Proton acceptor is the Tyr-162. The tract at residues 369–408 (GSPKQNGHCTNGFSESTRHNGHNGYGLVDSAKHNGNGHFH) is disordered. Polar residues predominate over residues 370–383 (SPKQNGHCTNGFSE).

Belongs to the NAD(P)-dependent epimerase/dehydratase family. Requires NAD(+) as cofactor.

It carries out the reaction UDP-alpha-D-glucose = UDP-alpha-D-galactose. The protein operates within carbohydrate metabolism; galactose metabolism. Catalyzes the interconversion between UDP-glucose and UDP-galactose. In Oryza sativa subsp. japonica (Rice), this protein is UDP-glucose 4-epimerase 2 (UGE-2).